A 430-amino-acid polypeptide reads, in one-letter code: Alpha-(1-&gt;3)-arabinofuranosyltransferase (430 aa).

10 consecutive transmembrane segments (helical) span residues 26–46 (APST…LSVI), 114–134 (WYIS…LRIF), 136–156 (YTLS…TESV), 160–180 (LVFT…FRWL), 194–214 (AIGL…LPVL), 218–238 (FYTL…AWPL), 276–296 (WLIL…LWLL), 307–327 (FWLL…LSLG), 352–372 (WPAW…LGHW), and 381–401 (YMKI…VLYF).

Belongs to the glycosyltransferase 87 family.

It is found in the cell membrane. The enzyme catalyses Adds an alpha-D-arabinofuranosyl group from trans,octacis-decaprenylphospho-beta-D-arabinofuranose at the 3-O-position of an alpha-(1-&gt;5)-arabinofuranan chain attached to a beta-(1-&gt;5)-galactofuranan chain.. It functions in the pathway cell wall biogenesis; cell wall polysaccharide biosynthesis. In terms of biological role, involved in the biosynthesis of the arabinogalactan (AG) region of the mycolylarabinogalactan-peptidoglycan (mAGP) complex, an essential component of the mycobacterial cell wall. Catalyzes the addition of an arabinofuranosyl (Araf) residue from the sugar donor beta-D-arabinofuranosyl-1-monophosphoryldecaprenol (DPA) on the C-3 of an alpha-(1-&gt;5)-linked Araf from the arabinan backbone of AG. This Mycolicibacterium smegmatis (strain ATCC 700084 / mc(2)155) (Mycobacterium smegmatis) protein is Alpha-(1-&gt;3)-arabinofuranosyltransferase (aftC).